We begin with the raw amino-acid sequence, 819 residues long: Zinc finger protein 27 (819 aa).

A KRAB domain is found at 1-75; sequence MDVTIDFSRE…KTLGAESCHD (75 aa). Positions 93 to 123 are disordered; the sequence is PKRPRHWDPPEDEPKHSSDLQTHDESNGLKR. A compositionally biased stretch (basic and acidic residues) spans 98-120; sequence HWDPPEDEPKHSSDLQTHDESNG. C2H2-type zinc fingers lie at residues 205–227, 233–255, 261–283, 289–311, 317–339, 345–367, 401–423, 429–451, 457–479, 485–507, 513–535, 541–563, 569–591, 597–619, 625–647, 653–675, 681–703, 709–731, 737–759, 765–787, and 793–815; these read YVCVECGKACSQTSEFLTHQKTH, YKCGDCGKSFFQVSSLFRHRRIH, YDCSHCGKGFSYNSDLRIHQKIH, HGCVDCGKAFTQKSTLRMHQKIH, YVCIECGQAFIQKTHLVAHRRIH, YACDGCGKAFLSKSQLLVHQRIH, SICAECGKAFTYRSELIIHQRTH, YQCGDCGKAFTQKSALTVHRRIH, YVCVKCGLAFVQRAHLDAHQVIH, YQCGHCGKFFTSKSQLHVHKRIH, YVCSNCGKAFANRSNLITHQKTH, YVCARCGKAFTQRSDLVTHQRIH, YGCSTCGKAFTQKSHLSIHEKIH, YGCRDCGKAFNQKSILIVHQKIH, HVCAECGRAFIRKSNFITHQRIH, YGCTDCGKSFTSKSQLLVHRPIH, YVCAECGKAFSGRSNLSKHQKTH, YACSECGKSFRQKSELITHHRIH, YDCGDCGKSFTKKSQLQVHQRIH, YRCAECGKAFTDRSNLNKHQTTH, and YKCVVCGKGFVQKSVLSIHENVH.

Belongs to the krueppel C2H2-type zinc-finger protein family.

Its subcellular location is the nucleus. May be involved in transcriptional regulation. This is Zinc finger protein 27 (Zfp27) from Mus musculus (Mouse).